The primary structure comprises 451 residues: 23S rRNA (uracil(1939)-C(5))-methyltransferase RlmD (451 aa).

The disordered stretch occupies residues Met-1 to Ile-21. In terms of domain architecture, TRAM spans Gln-20–Arg-78. [4Fe-4S] cluster is bound by residues Cys-91, Cys-97, Cys-100, and Cys-179. 6 residues coordinate S-adenosyl-L-methionine: Gln-283, Phe-312, Asn-317, Glu-333, Asp-360, and Asp-381. The active-site Nucleophile is the Cys-407.

This sequence belongs to the class I-like SAM-binding methyltransferase superfamily. RNA M5U methyltransferase family. RlmD subfamily.

It catalyses the reaction uridine(1939) in 23S rRNA + S-adenosyl-L-methionine = 5-methyluridine(1939) in 23S rRNA + S-adenosyl-L-homocysteine + H(+). Functionally, catalyzes the formation of 5-methyl-uridine at position 1939 (m5U1939) in 23S rRNA. The polypeptide is 23S rRNA (uracil(1939)-C(5))-methyltransferase RlmD (Pseudomonas syringae pv. tomato (strain ATCC BAA-871 / DC3000)).